Here is a 323-residue protein sequence, read N- to C-terminus: 8-oxo-dGDP phosphatase NUDT18 (323 aa).

Residues 37-167 enclose the Nudix hydrolase domain; sequence RLRKNVCYVV…DVLHLVELGA (131 aa). Leu58 serves as a coordination point for Mg(2+). Positions 76 to 97 match the Nudix box motif; sequence GRMEPGETIVEAMQREVKEEAG.

It belongs to the Nudix hydrolase family. Requires Mn(2+) as cofactor. Mg(2+) serves as cofactor.

The catalysed reaction is 8-oxo-dGDP + H2O = 8-oxo-dGMP + phosphate + H(+). It carries out the reaction 8-oxo-dADP + H2O = 8-oxo-dAMP + phosphate + H(+). It catalyses the reaction 2-oxo-dADP + H2O = 2-oxo-dAMP + phosphate + H(+). The enzyme catalyses 8-oxo-GDP + H2O = 8-oxo-GMP + phosphate + H(+). Its function is as follows. Mediates the hydrolysis of oxidized nucleoside diphosphate derivatives. Hydrolyzes 8-oxo-7,8-dihydroguanine (8-oxo-Gua)-containing deoxyribo- and ribonucleoside diphosphates to the monophosphates. Hydrolyzes 8-oxo-dGDP and 8-oxo-GDP with the same efficiencies. Also hydrolyzes 8-OH-dADP and 2-OH-dADP. Exhibited no or minimal hydrolysis activity against 8-oxo-dGTP, 8-oxo-GTP, dGTP, GTP, dGDP and GDP. Probably removes oxidized guanine nucleotides from both the DNA and RNA precursor pools. In Mus musculus (Mouse), this protein is 8-oxo-dGDP phosphatase NUDT18.